The sequence spans 434 residues: Maltoporin (434 aa).

A signal peptide spans 1–25 (MMTTLRKLPLALAIAAGVLTTQAMA).

Belongs to the porin LamB (TC 1.B.3) family. Homotrimer formed of three 18-stranded antiparallel beta-barrels, containing three independent channels.

Its subcellular location is the cell outer membrane. The enzyme catalyses beta-maltose(in) = beta-maltose(out). Its function is as follows. Involved in the transport of maltose and maltodextrins. In Serratia proteamaculans (strain 568), this protein is Maltoporin.